A 214-amino-acid chain; its full sequence is MQDMRLQGLYGISESGWYKRPHEAIELLLEAIEGGMKIFQLREKEGSDEEILPLARALWNHCRQKGVLFILNDRLDLALSLGVDGVHLGIDDAEASRARILLPHGIIGISCYGDLDRAHKAKEEGASYVAFGSCFPSPTKPASSVIDLTLFKKAQEELAIPLCAIGGIEAQNVGELIHCDMIAVISSLWSGGVAQVRKNAKGLIQSWRENRERV.

4-amino-2-methyl-5-(diphosphooxymethyl)pyrimidine contacts are provided by residues 40–44 (QLREK) and N72. Positions 73 and 92 each coordinate Mg(2+). S110 lines the 4-amino-2-methyl-5-(diphosphooxymethyl)pyrimidine pocket. 137–139 (SPT) provides a ligand contact to 2-[(2R,5Z)-2-carboxy-4-methylthiazol-5(2H)-ylidene]ethyl phosphate. K140 contributes to the 4-amino-2-methyl-5-(diphosphooxymethyl)pyrimidine binding site. Residues G167 and 185–186 (IS) each bind 2-[(2R,5Z)-2-carboxy-4-methylthiazol-5(2H)-ylidene]ethyl phosphate.

Belongs to the thiamine-phosphate synthase family. Mg(2+) is required as a cofactor.

It carries out the reaction 2-[(2R,5Z)-2-carboxy-4-methylthiazol-5(2H)-ylidene]ethyl phosphate + 4-amino-2-methyl-5-(diphosphooxymethyl)pyrimidine + 2 H(+) = thiamine phosphate + CO2 + diphosphate. The enzyme catalyses 2-(2-carboxy-4-methylthiazol-5-yl)ethyl phosphate + 4-amino-2-methyl-5-(diphosphooxymethyl)pyrimidine + 2 H(+) = thiamine phosphate + CO2 + diphosphate. The catalysed reaction is 4-methyl-5-(2-phosphooxyethyl)-thiazole + 4-amino-2-methyl-5-(diphosphooxymethyl)pyrimidine + H(+) = thiamine phosphate + diphosphate. It functions in the pathway cofactor biosynthesis; thiamine diphosphate biosynthesis; thiamine phosphate from 4-amino-2-methyl-5-diphosphomethylpyrimidine and 4-methyl-5-(2-phosphoethyl)-thiazole: step 1/1. Its function is as follows. Condenses 4-methyl-5-(beta-hydroxyethyl)thiazole monophosphate (THZ-P) and 2-methyl-4-amino-5-hydroxymethyl pyrimidine pyrophosphate (HMP-PP) to form thiamine monophosphate (TMP). This chain is Thiamine-phosphate synthase, found in Wolinella succinogenes (strain ATCC 29543 / DSM 1740 / CCUG 13145 / JCM 31913 / LMG 7466 / NCTC 11488 / FDC 602W) (Vibrio succinogenes).